A 456-amino-acid chain; its full sequence is Septin-10 (456 aa).

The Septin-type G domain occupies 40 to 306 (QGFCFNILCV…ELYRRCKLQE (267 aa)). Positions 50-57 (GETGIGKS) are G1 motif. GTP contacts are provided by residues 50–57 (GETGIGKS), G105, 186–194 (KADTISKSE), G240, and R255. The segment at 102–105 (NTVG) is G3 motif. The G4 motif stretch occupies residues 185–188 (AKAD). S418 bears the Phosphoserine mark.

The protein belongs to the TRAFAC class TrmE-Era-EngA-EngB-Septin-like GTPase superfamily. Septin GTPase family. As to quaternary structure, septins polymerize into heterooligomeric protein complexes that form filaments, and can associate with cellular membranes, actin filaments and microtubules. GTPase activity is required for filament formation. Interacts with ADGB. Proteolytically cleaved in vitro in a calmodulin-dependent manner.

The protein localises to the cytoplasm. It is found in the cytoskeleton. The protein resides in the cell projection. It localises to the cilium. Its subcellular location is the flagellum. Functionally, filament-forming cytoskeletal GTPase. May play a role in cytokinesis (Potential). The polypeptide is Septin-10 (Rattus norvegicus (Rat)).